A 228-amino-acid chain; its full sequence is Ribose-5-phosphate isomerase A (228 aa).

Substrate is bound by residues 29-32 (TGST), 85-88 (DGAD), and 98-101 (KGGG). Catalysis depends on Glu107, which acts as the Proton acceptor. Lys125 provides a ligand contact to substrate.

It belongs to the ribose 5-phosphate isomerase family. As to quaternary structure, homodimer.

The enzyme catalyses aldehydo-D-ribose 5-phosphate = D-ribulose 5-phosphate. It participates in carbohydrate degradation; pentose phosphate pathway; D-ribose 5-phosphate from D-ribulose 5-phosphate (non-oxidative stage): step 1/1. Functionally, catalyzes the reversible conversion of ribose-5-phosphate to ribulose 5-phosphate. The protein is Ribose-5-phosphate isomerase A of Staphylococcus aureus (strain COL).